The following is a 304-amino-acid chain: MQLKDLINKKKNLNNINLKVSNERNIFLINIMKLNQRLTFFSKNAFEIKESILSLKRIYNIKHDMLRHEERKIFKFLNKINDRVLWIYLTEEQKYSTDSYSRYEQKILKTIKSNRDDFILIGQGAIEFGKNHNLNVLQTFNDSNIKNLTTQLTKMIMILYTFDNYKKVNFVINSNKNYDGHFTILPMNEFSFDKFINLQKCDSNIIDFQKVKIYPNLNEFINVQINVFLVNIINTLITESSFYKTKNGLVATNNILKELDDNLSKIQRKITRVKTELQIEEINLLARQNMNEDDNDNDGGVYES.

This is an uncharacterized protein from Ureaplasma parvum serovar 3 (strain ATCC 700970).